The chain runs to 512 residues: MSKKPVMLMILDGFGISPNKEGNAVAAANKPNYDRLFNKYPHTELQASGLEVGLPEGQMGNSEVGHLNIGAGRIIYQELTRITKEIKEGTFFTNKALVKAMDEAKENNTSLHLMGLLSNGGVHSHIDHLKGLLELAKKKGLQKVYVHAFMDGRDVAPSSGKEFIVELENAMKEIGVGEIATISGRYYAMDRDNRWERVELAYNAMVLGEGEKASSAVEAIEKSYHDNKTDEFVLPTVIEEDGHPVSRIKDGDSVIFFNFRPDRAREITRAIVDPEFKGFERKQLHVNFVCMTQYDKTLECVDVAYRPENYTNTLGEYVASKGLNQLRIAETEKYAHVTFFFNGGVEQPNTNEDRALIASPKVATYDLKPEMSAYEVTDELIKRLDEDKYDMIILNFANPDMVGHTGVQEAAVKAIEAVDECLGKVADKVLEKEGTLFITADHGNAEVMIDYSTGKPMTAHTSDPVPFLWISKDAEGKSLKDGGKLADIAPTMLTVMGLEVPSEMTGTCLLNK.

The Mn(2+) site is built by Asp-12 and Ser-62. The Phosphoserine intermediate role is filled by Ser-62. Substrate is bound by residues His-123, 153–154 (RD), Arg-185, Arg-191, 260–263 (RPDR), and Lys-333. Residues Asp-400, His-404, Asp-441, His-442, and His-460 each contribute to the Mn(2+) site.

The protein belongs to the BPG-independent phosphoglycerate mutase family. In terms of assembly, monomer. Mn(2+) is required as a cofactor.

The enzyme catalyses (2R)-2-phosphoglycerate = (2R)-3-phosphoglycerate. Its pathway is carbohydrate degradation; glycolysis; pyruvate from D-glyceraldehyde 3-phosphate: step 3/5. Catalyzes the interconversion of 2-phosphoglycerate and 3-phosphoglycerate. This chain is 2,3-bisphosphoglycerate-independent phosphoglycerate mutase, found in Clostridium perfringens (strain SM101 / Type A).